The chain runs to 215 residues: Orotate phosphoribosyltransferase (215 aa).

K26 serves as a coordination point for 5-phospho-alpha-D-ribose 1-diphosphate. Residue 34-35 (FF) coordinates orotate. 5-phospho-alpha-D-ribose 1-diphosphate is bound by residues 72 to 73 (YK), R99, K100, K103, H105, and 125 to 133 (DDVISSGIS). Orotate contacts are provided by S129 and R157.

The protein belongs to the purine/pyrimidine phosphoribosyltransferase family. PyrE subfamily. Homodimer. It depends on Mg(2+) as a cofactor.

It catalyses the reaction orotidine 5'-phosphate + diphosphate = orotate + 5-phospho-alpha-D-ribose 1-diphosphate. It participates in pyrimidine metabolism; UMP biosynthesis via de novo pathway; UMP from orotate: step 1/2. In terms of biological role, catalyzes the transfer of a ribosyl phosphate group from 5-phosphoribose 1-diphosphate to orotate, leading to the formation of orotidine monophosphate (OMP). In Halorhodospira halophila (strain DSM 244 / SL1) (Ectothiorhodospira halophila (strain DSM 244 / SL1)), this protein is Orotate phosphoribosyltransferase.